We begin with the raw amino-acid sequence, 265 residues long: Capsule polysaccharide export inner-membrane protein CtrC (265 aa).

6 helical membrane passes run 37-57 (IGFLWLFVEPLLMTFVIVLMW), 67-84 (TLNIVAFAITGYPMLMMW), 121-141 (IAGATIAQIVIMAVLIAIGWI), 148-168 (FYMLMAWLLMAFFAIGLGLVI), 178-198 (FGKIWGTLTFVMMPLSGAFFF), and 238-258 (WYIVLCNLVLLLFGLAMVSKF). Residues 37–258 (IGFLWLFVEP…LFGLAMVSKF (222 aa)) enclose the ABC transmembrane type-2 domain.

It belongs to the ABC-2 integral membrane protein family.

It is found in the cell inner membrane. Its function is as follows. May form an ATP-driven capsule polysaccharide export apparatus, in association with the CtrB and CtrD proteins. The chain is Capsule polysaccharide export inner-membrane protein CtrC (ctrC) from Neisseria meningitidis serogroup B (strain ATCC BAA-335 / MC58).